Consider the following 27-residue polypeptide: Allergen C-C (27 aa).

This sequence belongs to the protease inhibitor I6 (cereal trypsin/alpha-amylase inhibitor) family.

The protein localises to the secreted. The protein is Allergen C-C of Triticum aestivum (Wheat).